Reading from the N-terminus, the 93-residue chain is Large ribosomal subunit protein mL41 (93 aa).

A mitochondrion-targeting transit peptide spans 1 to 13; that stretch reads MHQSLLCFGARRL.

It belongs to the mitochondrion-specific ribosomal protein mL41 family. As to quaternary structure, component of the mitochondrial large ribosomal subunit (mt-LSU). Mature yeast 74S mitochondrial ribosomes consist of a small (37S) and a large (54S) subunit. The 37S small subunit contains a 15S ribosomal RNA (15S mt-rRNA) and at least 32 different proteins. The 54S large subunit contains a 21S rRNA (21S mt-rRNA) and at least 45 different proteins.

The protein localises to the mitochondrion. Its function is as follows. Component of the mitochondrial ribosome (mitoribosome), a dedicated translation machinery responsible for the synthesis of mitochondrial genome-encoded proteins, including at least some of the essential transmembrane subunits of the mitochondrial respiratory chain. The mitoribosomes are attached to the mitochondrial inner membrane and translation products are cotranslationally integrated into the membrane. In Schizosaccharomyces pombe (strain 972 / ATCC 24843) (Fission yeast), this protein is Large ribosomal subunit protein mL41 (mrpl27).